Reading from the N-terminus, the 207-residue chain is Large ribosomal subunit protein uL4 (207 aa).

The disordered stretch occupies residues arginine 45–isoleucine 78.

This sequence belongs to the universal ribosomal protein uL4 family. In terms of assembly, part of the 50S ribosomal subunit.

Functionally, one of the primary rRNA binding proteins, this protein initially binds near the 5'-end of the 23S rRNA. It is important during the early stages of 50S assembly. It makes multiple contacts with different domains of the 23S rRNA in the assembled 50S subunit and ribosome. Its function is as follows. Forms part of the polypeptide exit tunnel. The sequence is that of Large ribosomal subunit protein uL4 from Lacticaseibacillus paracasei (strain ATCC 334 / BCRC 17002 / CCUG 31169 / CIP 107868 / KCTC 3260 / NRRL B-441) (Lactobacillus paracasei).